The following is a 261-amino-acid chain: 3-methyl-2-oxobutanoate hydroxymethyltransferase (261 aa).

Residues Asp-42 and Asp-81 each coordinate Mg(2+). Residues 42–43 (DS), Asp-81, and Lys-110 each bind 3-methyl-2-oxobutanoate. Glu-112 is a Mg(2+) binding site. Catalysis depends on Glu-179, which acts as the Proton acceptor.

The protein belongs to the PanB family. Homodecamer; pentamer of dimers. It depends on Mg(2+) as a cofactor.

It is found in the cytoplasm. The catalysed reaction is 3-methyl-2-oxobutanoate + (6R)-5,10-methylene-5,6,7,8-tetrahydrofolate + H2O = 2-dehydropantoate + (6S)-5,6,7,8-tetrahydrofolate. It functions in the pathway cofactor biosynthesis; coenzyme A biosynthesis. In terms of biological role, catalyzes the reversible reaction in which hydroxymethyl group from 5,10-methylenetetrahydrofolate is transferred onto alpha-ketoisovalerate to form ketopantoate. This is 3-methyl-2-oxobutanoate hydroxymethyltransferase from Pyrobaculum neutrophilum (strain DSM 2338 / JCM 9278 / NBRC 100436 / V24Sta) (Thermoproteus neutrophilus).